Consider the following 512-residue polypeptide: MRLNSTEISKLIKERIAQFEVFNQSYNEGSIISVSDGIIKINGLSNVMLGEMILLPNNEYAIALNIERDTVGAVVMGPYIHISEGAKVRCTGKILEVPVGDNFLGRVVNALGFPIDGKDSIQNDGFFPVEADAPGVIDRKSVNQPIQTGYKVIDSMIPIGRGQRELIIGDRQTGKTALAIDTIINQKQSGIKCIYVAIGQKLSTIINVVKKLEENNALFNTIIVVASASEAASLQYLAPYSGCAMAEFFRNKGEDSLIIYDDLSKHAVAYRQISLLLRRPPGREAFPGDIFYLHSRLLERASRVSMEYVQKITKNKITGKTGSITALPIIETQSGDVSAFVPTNVISITDGQIFLESNLFNSGIRPAVNPGISVSRVGSAAQTTIIKKLSSGIRTALAQYQELAAFSQFSSDLDDTTRKQLNHGQKITELLKQKQYSPISIAEQALILFVAENNFLDDISIDKITKFEKEILIYAHNYYFDLMEEINKIGDFNIVIKDKFIKLITEFKKNQF.

169 to 176 (GDRQTGKT) contacts ATP.

This sequence belongs to the ATPase alpha/beta chains family. As to quaternary structure, F-type ATPases have 2 components, CF(1) - the catalytic core - and CF(0) - the membrane proton channel. CF(1) has five subunits: alpha(3), beta(3), gamma(1), delta(1), epsilon(1). CF(0) has three main subunits: a(1), b(2) and c(9-12). The alpha and beta chains form an alternating ring which encloses part of the gamma chain. CF(1) is attached to CF(0) by a central stalk formed by the gamma and epsilon chains, while a peripheral stalk is formed by the delta and b chains.

It localises to the cell membrane. It carries out the reaction ATP + H2O + 4 H(+)(in) = ADP + phosphate + 5 H(+)(out). Produces ATP from ADP in the presence of a proton gradient across the membrane. The alpha chain is a regulatory subunit. The chain is ATP synthase subunit alpha from Buchnera aphidicola subsp. Acyrthosiphon pisum (strain Tuc7).